The chain runs to 557 residues: Urocanate hydratase (557 aa).

NAD(+) is bound by residues 53-54 (GG), Q131, 177-179 (GMG), E197, R202, 243-244 (NA), 264-268 (QTSAH), 274-275 (YL), and Y323. Residue C411 is part of the active site. G493 is a binding site for NAD(+).

Belongs to the urocanase family. NAD(+) is required as a cofactor.

It localises to the cytoplasm. It carries out the reaction 4-imidazolone-5-propanoate = trans-urocanate + H2O. It functions in the pathway amino-acid degradation; L-histidine degradation into L-glutamate; N-formimidoyl-L-glutamate from L-histidine: step 2/3. Its function is as follows. Catalyzes the conversion of urocanate to 4-imidazolone-5-propionate. In Pseudomonas putida (strain GB-1), this protein is Urocanate hydratase.